Reading from the N-terminus, the 456-residue chain is tRNA modification GTPase MnmE (456 aa).

Positions 24, 81, and 120 each coordinate (6S)-5-formyl-5,6,7,8-tetrahydrofolate. One can recognise a TrmE-type G domain in the interval 216-379; that stretch reads GMTVVIAGRP…LRDHLKGCMG (164 aa). N226 is a K(+) binding site. GTP is bound by residues 226–231, 245–251, 270–273, and 335–338; these read NAGKSS, TDIAGTT, DTAG, and NKAD. Residue S230 participates in Mg(2+) binding. K(+) is bound by residues T245, I247, and T250. T251 is a Mg(2+) binding site. K456 is a binding site for (6S)-5-formyl-5,6,7,8-tetrahydrofolate.

The protein belongs to the TRAFAC class TrmE-Era-EngA-EngB-Septin-like GTPase superfamily. TrmE GTPase family. In terms of assembly, homodimer. Heterotetramer of two MnmE and two MnmG subunits. K(+) is required as a cofactor.

The protein localises to the cytoplasm. Functionally, exhibits a very high intrinsic GTPase hydrolysis rate. Involved in the addition of a carboxymethylaminomethyl (cmnm) group at the wobble position (U34) of certain tRNAs, forming tRNA-cmnm(5)s(2)U34. The polypeptide is tRNA modification GTPase MnmE (Pseudomonas putida (strain ATCC 47054 / DSM 6125 / CFBP 8728 / NCIMB 11950 / KT2440)).